A 120-amino-acid polypeptide reads, in one-letter code: ATP-dependent Clp protease adapter protein ClpS (120 aa).

Belongs to the ClpS family. As to quaternary structure, binds to the N-terminal domain of the chaperone ClpA.

In terms of biological role, involved in the modulation of the specificity of the ClpAP-mediated ATP-dependent protein degradation. The sequence is that of ATP-dependent Clp protease adapter protein ClpS from Pseudomonas syringae pv. syringae (strain B728a).